The chain runs to 416 residues: tRNA(Met) cytidine acetate ligase (416 aa).

ATP-binding positions include 7-20 (VVEYNPFHNGHLYH), Gly101, Asn163, and Arg188.

The protein belongs to the TmcAL family.

The protein resides in the cytoplasm. The enzyme catalyses cytidine(34) in elongator tRNA(Met) + acetate + ATP = N(4)-acetylcytidine(34) in elongator tRNA(Met) + AMP + diphosphate. Its function is as follows. Catalyzes the formation of N(4)-acetylcytidine (ac(4)C) at the wobble position of elongator tRNA(Met), using acetate and ATP as substrates. First activates an acetate ion to form acetyladenylate (Ac-AMP) and then transfers the acetyl group to tRNA to form ac(4)C34. The chain is tRNA(Met) cytidine acetate ligase from Bacillus licheniformis (strain ATCC 14580 / DSM 13 / JCM 2505 / CCUG 7422 / NBRC 12200 / NCIMB 9375 / NCTC 10341 / NRRL NRS-1264 / Gibson 46).